A 60-amino-acid polypeptide reads, in one-letter code: Large ribosomal subunit protein uL30 (60 aa).

It belongs to the universal ribosomal protein uL30 family. As to quaternary structure, part of the 50S ribosomal subunit.

This is Large ribosomal subunit protein uL30 from Syntrophobacter fumaroxidans (strain DSM 10017 / MPOB).